A 470-amino-acid polypeptide reads, in one-letter code: Calcium-binding and coiled-coil domain-containing protein 2 (470 aa).

The CLIR motif lies at I131–V134. Positions L132–E368 form a coiled coil. The LIR-like signature appears at Q201–Q204. The UBZ1-type zinc finger occupies Q441–H464. The Zn(2+) site is built by C444, C447, H460, and H464.

It belongs to the CALCOCO family.

It localises to the cytoplasm. It is found in the perinuclear region. Its subcellular location is the cytoskeleton. The protein localises to the cytoplasmic vesicle. The protein resides in the autophagosome membrane. Its function is as follows. Xenophagy-specific receptor required for autophagy-mediated intracellular bacteria degradation. Acts as an effector protein of galectin-sensed membrane damage that restricts the proliferation of infecting pathogens upon entry into the cytosol by targeting galectin-associated bacteria for autophagy. Initially orchestrates bacteria targeting to autophagosomes and subsequently ensures pathogen degradation by regulating pathogen-containing autophagosome maturation. May play a role in ruffle formation and actin cytoskeleton organization and seems to negatively regulate constitutive secretion. This chain is Calcium-binding and coiled-coil domain-containing protein 2, found in Xenopus tropicalis (Western clawed frog).